Reading from the N-terminus, the 369-residue chain is 4-hydroxy-3-methylbut-2-en-1-yl diphosphate synthase (flavodoxin) (369 aa).

Residues Cys270, Cys273, Cys305, and Glu312 each coordinate [4Fe-4S] cluster.

Belongs to the IspG family. It depends on [4Fe-4S] cluster as a cofactor.

The enzyme catalyses (2E)-4-hydroxy-3-methylbut-2-enyl diphosphate + oxidized [flavodoxin] + H2O + 2 H(+) = 2-C-methyl-D-erythritol 2,4-cyclic diphosphate + reduced [flavodoxin]. Its pathway is isoprenoid biosynthesis; isopentenyl diphosphate biosynthesis via DXP pathway; isopentenyl diphosphate from 1-deoxy-D-xylulose 5-phosphate: step 5/6. In terms of biological role, converts 2C-methyl-D-erythritol 2,4-cyclodiphosphate (ME-2,4cPP) into 1-hydroxy-2-methyl-2-(E)-butenyl 4-diphosphate. This Psychromonas ingrahamii (strain DSM 17664 / CCUG 51855 / 37) protein is 4-hydroxy-3-methylbut-2-en-1-yl diphosphate synthase (flavodoxin).